The chain runs to 104 residues: DNA-directed RNA polymerase subunit Rpo13 (104 aa).

Disordered regions lie at residues 1–33 (MVSGMSTDEEKEGTSDEEVNEEKEVEETSEDEF) and 78–104 (RDSRRKAKKAVSKKVKKTKKKEKSVEG). Residues 7 to 31 (TDEEKEGTSDEEVNEEKEVEETSED) are compositionally biased toward acidic residues. The span at 80–104 (SRRKAKKAVSKKVKKTKKKEKSVEG) shows a compositional bias: basic residues.

It belongs to the archaeal Rpo13 RNA polymerase subunit family. In terms of assembly, part of the 13-subunit RNA polymerase complex.

The protein localises to the cytoplasm. It carries out the reaction RNA(n) + a ribonucleoside 5'-triphosphate = RNA(n+1) + diphosphate. Functionally, DNA-dependent RNA polymerase (RNAP) catalyzes the transcription of DNA into RNA using the four ribonucleoside triphosphates as substrates. Probably binds dsDNA. This Saccharolobus solfataricus (strain ATCC 35092 / DSM 1617 / JCM 11322 / P2) (Sulfolobus solfataricus) protein is DNA-directed RNA polymerase subunit Rpo13.